The following is a 675-amino-acid chain: Protein PALS1 (675 aa).

Disordered stretches follow at residues 1–32 (MTTSYMNGHVTEESDSGIKNLGLASPEEHPKH) and 52–79 (RSAQLERIRQQQEDMRRRREEEGKKQEL). The segment at 1 to 345 (MTTSYMNGHV…QQIKPPPAKE (345 aa)) is required for the correct localization of PALS1 and PATJ at cell-cell contacts and the normal formation of tight junctions and adherens junctions. Phosphoserine is present on residues Ser14 and Ser25. Positions 21–140 (LGLASPEEHP…LKHIQHTLVD (120 aa)) are interaction with PARD6B. A compositionally biased stretch (basic and acidic residues) spans 54–79 (AQLERIRQQQEDMRRRREEEGKKQEL). Residues Ser83 and Ser84 each carry the phosphoserine modification. L27 domains follow at residues 120–177 (KILE…NKAS) and 179–235 (PFPL…MQLE). The segment at 181 to 243 (PLIANVQDLV…LEPITDERVY (63 aa)) is interaction with LIN7C. The PDZ domain occupies 256 to 336 (IVRIEKARDI…TLTFVLIPSQ (81 aa)). The SH3 domain maps to 345–417 (ETVIHVKAHF…PGKSFQQQRE (73 aa)). Residues 479-660 (KRPIILIGPQ…AYQELLRLIN (182 aa)) enclose the Guanylate kinase-like domain. 486-493 (GPQNCGQN) is an ATP binding site.

Belongs to the MAGUK family. In terms of assembly, heterodimer with MPP1. Forms a heterotrimeric complex composed of PALS1, LIN7B and PATJ; the N-terminal L27 domain of PALS1 interacts with the L27 domain of PATJ and the C-terminal L27 domain of PALS1 interacts with the L27 domain of LIN7B. Component of a complex composed of PALS1, CRB1 and MPP4. Component of a complex whose core is composed of ARHGAP17, AMOT, PALS1, PATJ and PARD3/PAR3. Component of a complex composed of PALS1, CRB1 and EPB41L5. Within the complex, interacts (via HOOK domain) with EPB41L5 (via FERM domain), and interacts with CRB1 (via intracellular domain). Component of a complex composed of PALS1, MPP3 and CRB1; PALS1 acts as a bridging protein between MPP3 (via guanylate kinase-like domain) and CRB1. Component of a complex composed of CRB3, PALS1 and PATJ. As part of the Crumbs complex; interacts with WWP1, the interaction is enhanced by AMOTL2 and facilitates WWP1 localization to the plasma membrane. The Crumbs complex promotes monoubiquitination of AMOTL2 by WWP1, which activates the Hippo signaling pathway. Interacts (via PDZ domain) with PATJ (via N-terminus). Interacts with EZR. Interacts (via PDZ domain) with CRB1 (via C-terminal ERLI motif). While the PDZ domain is sufficient for interaction with CRB1, the adjacent SH3 and guanylate kinase-like domains are likely to contribute to a high affinity interaction. Interacts with WWTR1/TAZ (via WW domain). Interacts with MPP7. Interacts (via PDZ domain) with CRB3 (via C-terminus). Interacts with LIN7C. Interacts with MPDZ. Interacts with PARD6B. Interacts with SC6A1. Interacts with CDH5; the interaction promotes PALS1 localization to cell junctions and is required for CDH5-mediated vascular lumen formation and endothelial cell. Interacts with NPHP1 (via coiled coil and SH3 domains). Interacts with NPHP4. Interacts with CRB2.

It is found in the golgi apparatus. The protein localises to the cell membrane. The protein resides in the endomembrane system. It localises to the cell junction. Its subcellular location is the tight junction. It is found in the adherens junction. The protein localises to the cell projection. The protein resides in the axon. It localises to the perikaryon. Its subcellular location is the apical cell membrane. Functionally, plays a role in tight junction biogenesis and in the establishment of cell polarity in epithelial cells. Also involved in adherens junction biogenesis by ensuring correct localization of the exocyst complex protein EXOC4/SEC8 which allows trafficking of adherens junction structural component CDH1 to the cell surface. Plays a role through its interaction with CDH5 in vascular lumen formation and endothelial membrane polarity. Required during embryonic and postnatal retinal development. Required for the maintenance of cerebellar progenitor cells in an undifferentiated proliferative state, preventing premature differentiation, and is required for cerebellar histogenesis, fissure formation, cerebellar layer organization and cortical development. Plays a role in neuronal progenitor cell survival, potentially via promotion of mTOR signaling. Plays a role in the radial and longitudinal extension of the myelin sheath in Schwann cells. May modulate SC6A1/GAT1-mediated GABA uptake by stabilizing the transporter. May play a role in the T-cell receptor-mediated activation of NF-kappa-B. Required for localization of EZR to the apical membrane of parietal cells and may play a role in the dynamic remodeling of the apical cytoskeleton. Required for the normal polarized localization of the vesicular marker STX4. Required for the correct trafficking of the myelin proteins PMP22 and MAG. Involved in promoting phosphorylation and cytoplasmic retention of transcriptional coactivators YAP1 and WWTR1/TAZ which leads to suppression of TGFB1-dependent transcription of target genes such as CCN2/CTGF, SERPINE1/PAI1, SNAI1/SNAIL1 and SMAD7. The chain is Protein PALS1 from Rattus norvegicus (Rat).